Here is a 362-residue protein sequence, read N- to C-terminus: Peptide chain release factor 1 (362 aa).

Q240 is subject to N5-methylglutamine.

This sequence belongs to the prokaryotic/mitochondrial release factor family. In terms of processing, methylated by PrmC. Methylation increases the termination efficiency of RF1.

Its subcellular location is the cytoplasm. Functionally, peptide chain release factor 1 directs the termination of translation in response to the peptide chain termination codons UAG and UAA. The sequence is that of Peptide chain release factor 1 from Bifidobacterium longum (strain NCC 2705).